Here is a 492-residue protein sequence, read N- to C-terminus: MANYFNTLNLRQQLDQLGKCRFMGRDEFADEASYLKGKKVVIVGCGAQGLNQGLNMRDSGLDIAYALRAEAIAEKRASWRKATENGFTVGTYEDLIPQADLIVNLTPDKQHSAVVQAVQPLMKQGAALGYSHGFNIVEVGEQIRKDITVVMVAPKCPGTEVREEYKRGFGVPTLIAVHPENDPKGEGMAIAKAWAAATGGHRAGVLQSSFVAEVKSDLMGEQTILCGMLQAGSLLGFDKLVSEGTDPAYAEKLIQFGWETITEALKQGGITLMMDRLSNPAKLRAYALSEQLKGIMAPLFQKHMDDIISGEFSGGMMADWANDDVKLLTWREETGKTAFENAPQFDGKIAEQEYFDNGVLMVAMVKAGVELAFETMVSSGIIEESAYYESLHELPLIANTIARKRLYEMNVVISDTAEYGNYLFANAAVPLLKGAFMASLQPGDLGKAVAGTEVDNAQLRDVNEAIRNHPIETVGHTLRGYMKDMKRIAVAG.

A KARI N-terminal Rossmann domain is found at 14–208 (LDQLGKCRFM…GGHRAGVLQS (195 aa)). Residues 45-48 (CGAQ), Arg68, Arg76, Ser78, and 108-110 (DKQ) each bind NADP(+). His132 is an active-site residue. Residue Gly158 participates in NADP(+) binding. KARI C-terminal knotted domains follow at residues 209–344 (SFVA…NAPQ) and 345–485 (FDGK…MKDM). Positions 217, 221, 389, and 393 each coordinate Mg(2+). Position 414 (Ser414) interacts with substrate.

The protein belongs to the ketol-acid reductoisomerase family. Requires Mg(2+) as cofactor.

The catalysed reaction is (2R)-2,3-dihydroxy-3-methylbutanoate + NADP(+) = (2S)-2-acetolactate + NADPH + H(+). It catalyses the reaction (2R,3R)-2,3-dihydroxy-3-methylpentanoate + NADP(+) = (S)-2-ethyl-2-hydroxy-3-oxobutanoate + NADPH + H(+). The protein operates within amino-acid biosynthesis; L-isoleucine biosynthesis; L-isoleucine from 2-oxobutanoate: step 2/4. It participates in amino-acid biosynthesis; L-valine biosynthesis; L-valine from pyruvate: step 2/4. Involved in the biosynthesis of branched-chain amino acids (BCAA). Catalyzes an alkyl-migration followed by a ketol-acid reduction of (S)-2-acetolactate (S2AL) to yield (R)-2,3-dihydroxy-isovalerate. In the isomerase reaction, S2AL is rearranged via a Mg-dependent methyl migration to produce 3-hydroxy-3-methyl-2-ketobutyrate (HMKB). In the reductase reaction, this 2-ketoacid undergoes a metal-dependent reduction by NADPH to yield (R)-2,3-dihydroxy-isovalerate. The protein is Ketol-acid reductoisomerase (NADP(+)) of Pectobacterium atrosepticum (strain SCRI 1043 / ATCC BAA-672) (Erwinia carotovora subsp. atroseptica).